A 324-amino-acid polypeptide reads, in one-letter code: Ribose-phosphate pyrophosphokinase 1 (324 aa).

ATP is bound by residues 39–41 (DGE) and 98–99 (RQ). His-132 and Asp-174 together coordinate Mg(2+). Lys-197 is a catalytic residue. D-ribose 5-phosphate contacts are provided by residues Arg-199, Asp-223, and 227-231 (DTAGT).

Belongs to the ribose-phosphate pyrophosphokinase family. Class I subfamily. As to quaternary structure, homohexamer. The cofactor is Mg(2+).

The protein resides in the cytoplasm. The enzyme catalyses D-ribose 5-phosphate + ATP = 5-phospho-alpha-D-ribose 1-diphosphate + AMP + H(+). The protein operates within metabolic intermediate biosynthesis; 5-phospho-alpha-D-ribose 1-diphosphate biosynthesis; 5-phospho-alpha-D-ribose 1-diphosphate from D-ribose 5-phosphate (route I): step 1/1. Involved in the biosynthesis of the central metabolite phospho-alpha-D-ribosyl-1-pyrophosphate (PRPP) via the transfer of pyrophosphoryl group from ATP to 1-hydroxyl of ribose-5-phosphate (Rib-5-P). This chain is Ribose-phosphate pyrophosphokinase 1, found in Lactococcus lactis subsp. lactis (strain IL1403) (Streptococcus lactis).